The sequence spans 570 residues: Proline--tRNA ligase (570 aa).

The protein belongs to the class-II aminoacyl-tRNA synthetase family. ProS type 1 subfamily. As to quaternary structure, homodimer.

The protein resides in the cytoplasm. It catalyses the reaction tRNA(Pro) + L-proline + ATP = L-prolyl-tRNA(Pro) + AMP + diphosphate. Catalyzes the attachment of proline to tRNA(Pro) in a two-step reaction: proline is first activated by ATP to form Pro-AMP and then transferred to the acceptor end of tRNA(Pro). As ProRS can inadvertently accommodate and process non-cognate amino acids such as alanine and cysteine, to avoid such errors it has two additional distinct editing activities against alanine. One activity is designated as 'pretransfer' editing and involves the tRNA(Pro)-independent hydrolysis of activated Ala-AMP. The other activity is designated 'posttransfer' editing and involves deacylation of mischarged Ala-tRNA(Pro). The misacylated Cys-tRNA(Pro) is not edited by ProRS. The sequence is that of Proline--tRNA ligase from Wolinella succinogenes (strain ATCC 29543 / DSM 1740 / CCUG 13145 / JCM 31913 / LMG 7466 / NCTC 11488 / FDC 602W) (Vibrio succinogenes).